Here is a 357-residue protein sequence, read N- to C-terminus: Histidinol-phosphate aminotransferase 1 (357 aa).

Residue Lys-210 is modified to N6-(pyridoxal phosphate)lysine.

It belongs to the class-II pyridoxal-phosphate-dependent aminotransferase family. Histidinol-phosphate aminotransferase subfamily. As to quaternary structure, homodimer. The cofactor is pyridoxal 5'-phosphate.

It catalyses the reaction L-histidinol phosphate + 2-oxoglutarate = 3-(imidazol-4-yl)-2-oxopropyl phosphate + L-glutamate. It participates in amino-acid biosynthesis; L-histidine biosynthesis; L-histidine from 5-phospho-alpha-D-ribose 1-diphosphate: step 7/9. The sequence is that of Histidinol-phosphate aminotransferase 1 from Methylococcus capsulatus (strain ATCC 33009 / NCIMB 11132 / Bath).